The chain runs to 359 residues: Alanine racemase, biosynthetic (359 aa).

Catalysis depends on K34, which acts as the Proton acceptor; specific for D-alanine. The residue at position 34 (K34) is an N6-(pyridoxal phosphate)lysine. Residue K122 is modified to N6-carboxylysine. R129 is a binding site for substrate. Y255 functions as the Proton acceptor; specific for L-alanine in the catalytic mechanism. M303 contacts substrate.

It belongs to the alanine racemase family. In terms of assembly, homodimer. Pyridoxal 5'-phosphate is required as a cofactor.

It carries out the reaction L-alanine = D-alanine. Its pathway is amino-acid biosynthesis; D-alanine biosynthesis; D-alanine from L-alanine: step 1/1. The protein operates within cell wall biogenesis; peptidoglycan biosynthesis. Catalyzes the interconversion of L-alanine and D-alanine. Provides the D-alanine required for cell wall biosynthesis. The chain is Alanine racemase, biosynthetic from Escherichia coli (strain K12).